The following is a 111-amino-acid chain: MRDIGIDVKPPERECEDENCPFHGTLSVRGQLLRGKVVKVYGKTAVIERELIRYVPKFERYMKKRSKLHAHNPRCIRARPGDIVTIGECRPISKTKSFVILEVVGNEGNKS.

The protein belongs to the universal ribosomal protein uS17 family. As to quaternary structure, part of the 30S ribosomal subunit.

Functionally, one of the primary rRNA binding proteins, it binds specifically to the 5'-end of 16S ribosomal RNA. This Archaeoglobus fulgidus (strain ATCC 49558 / DSM 4304 / JCM 9628 / NBRC 100126 / VC-16) protein is Small ribosomal subunit protein uS17.